A 266-amino-acid polypeptide reads, in one-letter code: Dickkopf-related protein 1 (266 aa).

Positions 1 to 31 are cleaved as a signal peptide; it reads MMALGAAGATRVFVAMVAAALGGHPLLGVSA. An O-linked (GalNAc...) serine glycan is attached at Ser-61. Cystine bridges form between Cys-85/Cys-97, Cys-91/Cys-111, Cys-114/Cys-128, Cys-121/Cys-133, Cys-127/Cys-138, Cys-189/Cys-201, Cys-195/Cys-210, Cys-200/Cys-237, Cys-220/Cys-245, and Cys-239/Cys-263. The segment at 85–138 is DKK-type Cys-1; that stretch reads CAEDEECGTDEYCASPTRGGDAGVQICLACRKRRKRCMRHAMCCPGNYCKNGIC. Residues 189-263 are DKK-type Cys-2; that stretch reads CLRSSDCASG…ASNSSRLHTC (75 aa). An N-linked (GlcNAc...) asparagine glycan is attached at Asn-256.

It belongs to the dickkopf family. As to quaternary structure, interacts with LRP6. Interacts (via the C-terminal Cys-rich domain) with LRP5 (via beta-propeller regions 3 and 4); the interaction, enhanced by MESD and or KREMEN, antagonizes Wnt-mediated signaling. Forms a ternary complex with LRP6 and KREM1. Interacts with KREM1. In terms of tissue distribution, placenta.

It localises to the secreted. Its function is as follows. Antagonizes canonical Wnt signaling by inhibiting LRP5/6 interaction with Wnt and by forming a ternary complex with the transmembrane protein KREMEN that promotes internalization of LRP5/6. DKKs play an important role in vertebrate development, where they locally inhibit Wnt regulated processes such as antero-posterior axial patterning, limb development, somitogenesis and eye formation. In the adult, Dkks are implicated in bone formation and bone disease, cancer and Alzheimer disease. Inhibits the pro-apoptotic function of KREMEN1 in a Wnt-independent manner, and has anti-apoptotic activity. This chain is Dickkopf-related protein 1 (DKK1), found in Homo sapiens (Human).